The following is a 246-amino-acid chain: uncharacterized protein (246 aa).

Positions 120–149 (EKCAGETSPYTSASVSNSKKATSSSNFTKS) are disordered. Residues 130–149 (TSASVSNSKKATSSSNFTKS) show a composition bias toward low complexity.

This is an uncharacterized protein from Caenorhabditis elegans.